A 128-amino-acid chain; its full sequence is Large ribosomal subunit protein bL12 (128 aa).

Belongs to the bacterial ribosomal protein bL12 family. Homodimer. Part of the ribosomal stalk of the 50S ribosomal subunit. Forms a multimeric L10(L12)X complex, where L10 forms an elongated spine to which 2 to 4 L12 dimers bind in a sequential fashion. Binds GTP-bound translation factors.

Functionally, forms part of the ribosomal stalk which helps the ribosome interact with GTP-bound translation factors. Is thus essential for accurate translation. The protein is Large ribosomal subunit protein bL12 of Corynebacterium kroppenstedtii (strain DSM 44385 / JCM 11950 / CIP 105744 / CCUG 35717).